Consider the following 907-residue polypeptide: Phosphoenolpyruvate carboxylase (907 aa).

Residues His138 and Lys570 contribute to the active site.

This sequence belongs to the PEPCase type 1 family. Mg(2+) serves as cofactor.

The catalysed reaction is oxaloacetate + phosphate = phosphoenolpyruvate + hydrogencarbonate. Functionally, forms oxaloacetate, a four-carbon dicarboxylic acid source for the tricarboxylic acid cycle. The chain is Phosphoenolpyruvate carboxylase from Streptococcus mutans serotype c (strain ATCC 700610 / UA159).